The primary structure comprises 182 residues: ATP-dependent protease subunit HslV (182 aa).

The active site involves Thr9. The Na(+) site is built by Ala167, Cys170, and Thr173.

This sequence belongs to the peptidase T1B family. HslV subfamily. As to quaternary structure, a double ring-shaped homohexamer of HslV is capped on each side by a ring-shaped HslU homohexamer. The assembly of the HslU/HslV complex is dependent on binding of ATP.

It localises to the cytoplasm. It carries out the reaction ATP-dependent cleavage of peptide bonds with broad specificity.. With respect to regulation, allosterically activated by HslU binding. Its function is as follows. Protease subunit of a proteasome-like degradation complex believed to be a general protein degrading machinery. This chain is ATP-dependent protease subunit HslV, found in Enterococcus faecalis (strain ATCC 700802 / V583).